The primary structure comprises 390 residues: Tuftelin (390 aa).

Coiled-coil stretches lie at residues 88–126 and 162–351; these read DKMI…KLDR and DTHI…IEKQ. Ser171 carries the post-translational modification Phosphoserine.

Belongs to the tuftelin family. As to quaternary structure, interacts with TFIP11. Present in the extracellular enamel and is mainly associated with the crystal component.

It is found in the secreted. Functionally, involved in the structural organization of the epidermis. Involved in the mineralization and structural organization of enamel. The protein is Tuftelin (TUFT1) of Bos taurus (Bovine).